A 422-amino-acid chain; its full sequence is Elongation factor 1-alpha (422 aa).

The region spanning 5-221 (KPHMNLAVIG…DELKEPEKPS (217 aa)) is the tr-type G domain. The G1 stretch occupies residues 14-21 (GHIDHGKS). Residue 14–21 (GHIDHGKS) coordinates GTP. Residue S21 coordinates Mg(2+). The tract at residues 70–74 (GITID) is G2. The interval 91 to 94 (DCPG) is G3. Residues 91–95 (DCPGH) and 146–149 (NKMD) contribute to the GTP site. A G4 region spans residues 146–149 (NKMD). The tract at residues 185 to 187 (SAF) is G5.

It belongs to the TRAFAC class translation factor GTPase superfamily. Classic translation factor GTPase family. EF-Tu/EF-1A subfamily.

The protein localises to the cytoplasm. The catalysed reaction is GTP + H2O = GDP + phosphate + H(+). Its function is as follows. GTP hydrolase that promotes the GTP-dependent binding of aminoacyl-tRNA to the A-site of ribosomes during protein biosynthesis. This chain is Elongation factor 1-alpha, found in Methanosarcina acetivorans (strain ATCC 35395 / DSM 2834 / JCM 12185 / C2A).